A 129-amino-acid polypeptide reads, in one-letter code: Small ribosomal subunit protein uS9 (129 aa).

It belongs to the universal ribosomal protein uS9 family.

The polypeptide is Small ribosomal subunit protein uS9 (Pelodictyon phaeoclathratiforme (strain DSM 5477 / BU-1)).